A 741-amino-acid polypeptide reads, in one-letter code: uncharacterized protein (741 aa).

A signal peptide spans 1–18 (MKTISILAFLVLARLIEA). 3 disordered regions span residues 142-300 (PKVE…GNVD), 423-528 (EEDE…SEQG), and 646-681 (ETVA…VEDD). The segment covering 147–165 (EEEEEEYDGEEDDDDESLT) has biased composition (acidic residues). Composition is skewed to low complexity over residues 183–197 (VEPS…STTE) and 205–266 (STTV…SSTT). Asparagine 232 and asparagine 241 each carry an N-linked (GlcNAc...) asparagine glycan. Residues 423–432 (EEDEIDETET) show a composition bias toward acidic residues. Positions 433 to 451 (TESTKTTETTKTTGPAETT) are enriched in low complexity. Asparagine 461 and asparagine 511 each carry an N-linked (GlcNAc...) asparagine glycan. Residues 500-511 (PIDESTESEEPN) are compositionally biased toward acidic residues. Residues 512 to 528 (ESVTVTGDTTTDTSEQG) show a composition bias toward low complexity. Polar residues predominate over residues 646-656 (ETVAPDTNSPD). Residues 657-671 (ADQEQPDSVEPDNET) are compositionally biased toward acidic residues. N-linked (GlcNAc...) asparagine glycosylation occurs at asparagine 669. A lipid anchor (GPI-anchor amidated asparagine) is attached at asparagine 719. Residues 720-741 (AANLAGSISLSSGVLLLILMLI) constitute a propeptide, removed in mature form.

It localises to the cell membrane. This is an uncharacterized protein from Candida albicans (strain SC5314 / ATCC MYA-2876) (Yeast).